A 223-amino-acid chain; its full sequence is Cytotoxic T-lymphocyte protein 4 (223 aa).

The first 35 residues, 1–35, serve as a signal peptide directing secretion; that stretch reads MACLGFQRHKAQLNLATRTWPCTLLFFLLFIPVFC. The Extracellular segment spans residues 36 to 161; that stretch reads KAMHVAQPAV…IDPEPCPDSD (126 aa). The Ig-like V-type domain occupies 39-140; the sequence is HVAQPAVVLA…VELMYPPPYY (102 aa). Positions 46–50 are homodimerization; the sequence is VLASS. 2 cysteine pairs are disulfide-bonded: Cys58–Cys129 and Cys85–Cys103. An N-linked (GlcNAc...) asparagine glycan is attached at Asn113. Residues 134–139 form an important for interaction with CD80 and CD86 region; that stretch reads MYPPPY. An N-linked (GlcNAc...) asparagine glycan is attached at Asn145. Residues 150 to 155 form a homodimerization region; that stretch reads YVIDPE. The helical transmembrane segment at 162 to 182 threads the bilayer; it reads FLLWILAAVSSGLFFYSFLLT. Residues 183-223 lie on the Cytoplasmic side of the membrane; it reads AVSLSKMLKKRSPLTTGVYVKMPPTEPECEKQFQPYFIPIN. Tyr201 bears the Phosphotyrosine; by TXK and JAK2 mark.

Homodimer; disulfide-linked. Binds to CD80/B7-1 and CD86/B7.2. Interacts with ICOSLG. Post-translationally, N-glycosylation is important for dimerization. Phosphorylation at Tyr-201 prevents binding to the AP-2 adapter complex, blocks endocytosis, and leads to retention of CTLA4 on the cell surface. In terms of tissue distribution, widely expressed with highest levels in lymphoid tissues. Detected in activated T-cells where expression levels are 30- to 50-fold less than CD28, the stimulatory coreceptor, on the cell surface following activation.

Its subcellular location is the cell membrane. In terms of biological role, inhibitory receptor acting as a major negative regulator of T-cell responses. The affinity of CTLA4 for its natural B7 family ligands, CD80 and CD86, is considerably stronger than the affinity of their cognate stimulatory coreceptor CD28. The protein is Cytotoxic T-lymphocyte protein 4 (CTLA4) of Homo sapiens (Human).